Here is a 325-residue protein sequence, read N- to C-terminus: MNSSFHLHFLDLGLNTTDGNLSGLSVQNASSLCEDMGIAVEVFLALGLISLLENILVIGAIVRNRNLHTPMYFFVGSLAVADMLVSLSNSWETITIYLLTNKHLVMADASVRHLDNVFDSMICISVVASMCSLLAIAVDRYVTIFCALRYQRIMTGRRSGAIIGGIWAFCASCGTVFIVYYESTYVVICLIAMFLTMLLLMASLYTHMFLLARTHIRRIATLPGHSSVRQRTGVKGAITLAMLLGVFIVCWAPFFLHLILMISCPHNLYCSCFMSHFNMYLILIMCNSVIDPLIYAFRSQEMRKTFKEIVCFQSFRTPCRFPSRY.

The Extracellular portion of the chain corresponds to 1–37; sequence MNSSFHLHFLDLGLNTTDGNLSGLSVQNASSLCEDMG. Asn2, Asn15, Asn20, and Asn28 each carry an N-linked (GlcNAc...) asparagine glycan. A helical membrane pass occupies residues 38–61; that stretch reads IAVEVFLALGLISLLENILVIGAI. Residues 62 to 73 are Cytoplasmic-facing; the sequence is VRNRNLHTPMYF. Residues 74-97 traverse the membrane as a helical segment; sequence FVGSLAVADMLVSLSNSWETITIY. Over 98 to 114 the chain is Extracellular; the sequence is LLTNKHLVMADASVRHL. The helical transmembrane segment at 115–138 threads the bilayer; sequence DNVFDSMICISVVASMCSLLAIAV. Topologically, residues 139 to 155 are cytoplasmic; sequence DRYVTIFCALRYQRIMT. Residues 156 to 179 traverse the membrane as a helical segment; it reads GRRSGAIIGGIWAFCASCGTVFIV. At 180 to 186 the chain is on the extracellular side; the sequence is YYESTYV. Residues 187 to 211 form a helical membrane-spanning segment; the sequence is VICLIAMFLTMLLLMASLYTHMFLL. At 212–239 the chain is on the cytoplasmic side; that stretch reads ARTHIRRIATLPGHSSVRQRTGVKGAIT. A helical transmembrane segment spans residues 240-265; that stretch reads LAMLLGVFIVCWAPFFLHLILMISCP. The Extracellular segment spans residues 266 to 273; sequence HNLYCSCF. Residues 274–297 traverse the membrane as a helical segment; the sequence is MSHFNMYLILIMCNSVIDPLIYAF. The Cytoplasmic portion of the chain corresponds to 298–325; that stretch reads RSQEMRKTFKEIVCFQSFRTPCRFPSRY. The S-palmitoyl cysteine moiety is linked to residue Cys311.

It belongs to the G-protein coupled receptor 1 family.

The protein localises to the cell membrane. Functionally, receptor for MSH (alpha, beta and gamma) and ACTH. The activity of this receptor is mediated by G proteins which activate adenylate cyclase. This receptor is a possible mediator of the immunomodulation properties of melanocortins. The chain is Melanocortin receptor 5 (MC5R) from Bos taurus (Bovine).